Consider the following 518-residue polypeptide: Vesicular inhibitory amino acid transporter (518 aa).

Topologically, residues 1 to 125 (MATLIRSKLS…WNVTNAIQGM (125 aa)) are cytoplasmic. The helical transmembrane segment at 126-146 (FVLGLPYAILHGGYLGLFLII) threads the bilayer. Residues 147-197 (FAAVVCCYTGKILIACLYEENEDGETVRVRDSYVDIANACCAPRFPKLGGR) are Lumenal, vesicle-facing. Residues 198–218 (VVNVAQIIELVMTCILYVVVS) traverse the membrane as a helical segment. The Cytoplasmic portion of the chain corresponds to 219–258 (GNLMYNSFPNLPISQKSWSIMATAVLLPCAFLKNLKAVSK). Residues 259-279 (FSLLCTVAHFVINILVIAYCL) traverse the membrane as a helical segment. At 280–298 (SRARDWAWDKVKFYIDVKK) the chain is on the lumenal, vesicle side. The chain crosses the membrane as a helical span at residues 299-319 (FPISIGIIVFSYTSQIFLPSL). Residues 320–334 (EGNMQSPREFHCMMN) are Cytoplasmic-facing. A helical membrane pass occupies residues 335 to 355 (WTHIAACILKGLFALVAYLTW). Residues 356–376 (ADETKEVITDNLPSTIRAVVN) lie on the Lumenal, vesicle side of the membrane. Residues 377 to 397 (LFLVSKALLSYPLPFFAAVEV) traverse the membrane as a helical segment. Residues 398–431 (LEKSLFQEGARAFFPNCYGGDGRLKSWGLTLRCA) are Cytoplasmic-facing. A helical membrane pass occupies residues 432 to 452 (LVVFTLLMAIYVPHFALLMGL). At 453-454 (TG) the chain is on the lumenal, vesicle side. Residues 455-475 (SLTGAGLCFLLPSLFHLKLMW) form a helical membrane-spanning segment. Residues 476–482 (RQLLWHQ) are Cytoplasmic-facing. The chain crosses the membrane as a helical span at residues 483–503 (VFFDVSIFVIGSICSVSGFVH). The Lumenal, vesicle segment spans residues 504–518 (SLEGLIEAYAYNIED).

It belongs to the amino acid/polyamine transporter 2 family. As to expression, initially expressed in late neurula stages in the anterior spinal cord. By early tailbud stages, expression extends posteriorly along the entire developing spinal cord and appears in the hindbrain. In late tailbud embryos, expressed in the forebrain, midbrain, hindbrain, spinal cord and retina. In swimming tadpoles, expressed in an extended and more intense pattern including interneurons.

The protein resides in the cytoplasmic vesicle membrane. Its subcellular location is the presynapse. It carries out the reaction 4-aminobutanoate(out) + n H(+)(in) = 4-aminobutanoate(in) + n H(+)(out). The enzyme catalyses glycine(out) + n H(+)(in) = glycine(in) + n H(+)(out). It catalyses the reaction beta-alanine(out) + n H(+)(in) = beta-alanine(in) + n H(+)(out). Its function is as follows. Antiporter that exchanges vesicular protons for cytosolic 4-aminobutanoate or to a lesser extend glycine, thus allowing their secretion from nerve terminals. The transport is equally dependent on the chemical and electrical components of the proton gradient. May also transport beta-alanine. Acidification of GABAergic synaptic vesicles is a prerequisite for 4-aminobutanoate uptake. In Xenopus laevis (African clawed frog), this protein is Vesicular inhibitory amino acid transporter.